We begin with the raw amino-acid sequence, 356 residues long: Phospho-2-dehydro-3-deoxyheptonate aldolase, Tyr-sensitive (356 aa).

The protein belongs to the class-I DAHP synthase family. Requires a divalent metal cation as cofactor.

The enzyme catalyses D-erythrose 4-phosphate + phosphoenolpyruvate + H2O = 7-phospho-2-dehydro-3-deoxy-D-arabino-heptonate + phosphate. It functions in the pathway metabolic intermediate biosynthesis; chorismate biosynthesis; chorismate from D-erythrose 4-phosphate and phosphoenolpyruvate: step 1/7. Its activity is regulated as follows. Specifically feedback inhibited by tyrosine with 50% inhibition observed at 9 microM tyrosine, pH 7.0. In terms of biological role, stereospecific condensation of phosphoenolpyruvate (PEP) and D-erythrose-4-phosphate (E4P) giving rise to 3-deoxy-D-arabino-heptulosonate-7-phosphate (DAHP). The protein is Phospho-2-dehydro-3-deoxyheptonate aldolase, Tyr-sensitive (aroF) of Escherichia coli (strain K12).